Reading from the N-terminus, the 369-residue chain is 3,4-dihydroxy-2-butanone 4-phosphate synthase (369 aa).

Residues Met-1–Ser-201 form a DHBP synthase region. Residues Arg-27 to Glu-28, Asp-32, Arg-140 to Thr-144, and Glu-164 contribute to the D-ribulose 5-phosphate site. Mg(2+) is bound at residue Glu-28. His-143 serves as a coordination point for Mg(2+). Residues Thr-202–Gly-369 form a GTP cyclohydrolase II-like region.

It in the N-terminal section; belongs to the DHBP synthase family. In the C-terminal section; belongs to the GTP cyclohydrolase II family. It depends on Mg(2+) as a cofactor. Mn(2+) is required as a cofactor.

It catalyses the reaction D-ribulose 5-phosphate = (2S)-2-hydroxy-3-oxobutyl phosphate + formate + H(+). It functions in the pathway cofactor biosynthesis; riboflavin biosynthesis; 2-hydroxy-3-oxobutyl phosphate from D-ribulose 5-phosphate: step 1/1. Functionally, catalyzes the conversion of D-ribulose 5-phosphate to formate and 3,4-dihydroxy-2-butanone 4-phosphate. In Pseudomonas syringae pv. tomato (strain ATCC BAA-871 / DC3000), this protein is 3,4-dihydroxy-2-butanone 4-phosphate synthase (ribB).